A 204-amino-acid polypeptide reads, in one-letter code: Urease accessory protein UreG (204 aa).

15–22 (GPVGSGKT) contributes to the GTP binding site.

This sequence belongs to the SIMIBI class G3E GTPase family. UreG subfamily. In terms of assembly, homodimer. UreD, UreF and UreG form a complex that acts as a GTP-hydrolysis-dependent molecular chaperone, activating the urease apoprotein by helping to assemble the nickel containing metallocenter of UreC. The UreE protein probably delivers the nickel.

It is found in the cytoplasm. Its function is as follows. Facilitates the functional incorporation of the urease nickel metallocenter. This process requires GTP hydrolysis, probably effectuated by UreG. The chain is Urease accessory protein UreG from Methylobacterium nodulans (strain LMG 21967 / CNCM I-2342 / ORS 2060).